A 514-amino-acid polypeptide reads, in one-letter code: CUGBP Elav-like family member 2 (514 aa).

3 consecutive RRM domains span residues 44–127 (IKMF…PADS), 136–216 (RKLF…FADT), and 429–507 (ANLF…LKRS).

It belongs to the CELF/BRUNOL family.

The protein resides in the nucleus. Its subcellular location is the cytoplasm. In terms of biological role, RNA-binding protein implicated in the regulation of several post-transcriptional events. May be involved in pre-mRNA alternative splicing, mRNA translation repression and stability. This Danio rerio (Zebrafish) protein is CUGBP Elav-like family member 2 (celf2).